The sequence spans 758 residues: 5-methyltetrahydropteroyltriglutamate--homocysteine methyltransferase (758 aa).

5-methyltetrahydropteroyltri-L-glutamate-binding positions include 16–19 (RELK) and Lys112. L-homocysteine-binding positions include 433–435 (IGS) and Glu486. L-methionine-binding positions include 433-435 (IGS) and Glu486. 5-methyltetrahydropteroyltri-L-glutamate contacts are provided by residues 517-518 (RC) and Trp563. Asp601 provides a ligand contact to L-homocysteine. Asp601 provides a ligand contact to L-methionine. Residue Glu607 coordinates 5-methyltetrahydropteroyltri-L-glutamate. Positions 643, 645, and 667 each coordinate Zn(2+). Residue His696 is the Proton donor of the active site. Cys728 serves as a coordination point for Zn(2+).

The protein belongs to the vitamin-B12 independent methionine synthase family. It depends on Zn(2+) as a cofactor.

The enzyme catalyses 5-methyltetrahydropteroyltri-L-glutamate + L-homocysteine = tetrahydropteroyltri-L-glutamate + L-methionine. The protein operates within amino-acid biosynthesis; L-methionine biosynthesis via de novo pathway; L-methionine from L-homocysteine (MetE route): step 1/1. In terms of biological role, catalyzes the transfer of a methyl group from 5-methyltetrahydrofolate to homocysteine resulting in methionine formation. The chain is 5-methyltetrahydropteroyltriglutamate--homocysteine methyltransferase from Neisseria meningitidis serogroup C / serotype 2a (strain ATCC 700532 / DSM 15464 / FAM18).